Consider the following 1081-residue polypeptide: Teashirt homolog 3 (1081 aa).

2 disordered regions span residues 141–161 and 238–257; these read PSSEKNNGSSSSSSSSSSSCG and HYRDDNHETDNNNPKRWSKP. Residues 148–161 show a composition bias toward low complexity; that stretch reads GSSSSSSSSSSSCG. 2 consecutive C2H2-type zinc fingers follow at residues 214–238 and 275–299; these read FRCKDCSAAYDTLVELTVHMNETGH and LKCMYCGHSFESLQDLSVHMIKTKH. A compositionally biased stretch (basic and acidic residues) spans 238–247; sequence HYRDDNHETD. A disordered region spans residues 325–364; it reads SLELELPSSPDSTGGTPKATISDTNDALQKNSNPYITPNN. Positions 335-364 are enriched in polar residues; it reads DSTGGTPKATISDTNDALQKNSNPYITPNN. Residues 386-404 form a C2H2-type 3; atypical zinc finger; sequence LKCMECGSSHDTLQELTAH. Residues 473 to 491 show a composition bias toward basic and acidic residues; that stretch reads EVDKEKAVTDEKPKQKDKP. 4 disordered regions span residues 473-502, 579-604, 626-687, and 855-897; these read EVDKEKAVTDEKPKQKDKPGEEEEKCDISS, NSEIVSPTKNQTLVSPPSSQTSPMPK, EKMK…LAEP, and TESH…RQSN. The span at 581–603 shows a compositional bias: polar residues; sequence EIVSPTKNQTLVSPPSSQTSPMP. A coiled-coil region spans residues 606–630; sequence NFHAMEELVKKVTEKVAKVEEKMKE. A Phosphoserine modification is found at Ser-682. Positions 856–869 are enriched in low complexity; sequence ESHTSKSSTPSSIS. The homeobox; atypical DNA-binding region spans 891-961; sequence RKGRQSNWNP…NVKYQLRRTG (71 aa). 2 consecutive C2H2-type zinc fingers follow at residues 976 to 998 and 1041 to 1064; these read FFCNDCASQIRTPSTYISHLESH and YQCKLCNRTFASKHAVKLHLSKTH.

Belongs to the teashirt C2H2-type zinc-finger protein family. In terms of assembly, interacts (via homeobox domain) with APBB1 (via PID domain 1). Interacts (via N-terminus) with HDAC1 and HDAC2; the interaction is direct. Found in a trimeric complex with APBB1 and HDAC1; the interaction between HDAC1 and APBB1 is mediated by TSHZ3. Expressed in brain; strongly reduced in post-mortem elderly subjects with Alzheimer disease. Expressed in the fetal neocortex.

The protein localises to the nucleus. The protein resides in the cell projection. Its subcellular location is the growth cone. Functionally, transcriptional regulator involved in developmental processes. Functions in association with APBB1, SET and HDAC factors as a transcriptional repressor, that inhibits the expression of CASP4. TSHZ3-mediated transcription repression involves the recruitment of histone deacetylases HDAC1 and HDAC2. Associates with chromatin in a region surrounding the CASP4 transcriptional start site(s). Regulates the development of neurons involved in both respiratory rhythm and airflow control. Promotes maintenance of nucleus ambiguus (nA) motoneurons, which govern upper airway function, and establishes a respiratory rhythm generator (RRG) activity compatible with survival at birth. Involved in the differentiation of the proximal uretic smooth muscle cells during developmental processes. Involved in the up-regulation of myocardin, that directs the expression of smooth muscle cells in the proximal ureter. Involved in the modulation of glutamatergic synaptic transmission and long-term synaptic potentiation. The polypeptide is Teashirt homolog 3 (TSHZ3) (Homo sapiens (Human)).